The sequence spans 80 residues: MATPTQSPTNVPEETDPFFYDYATVQTVGMTLATIMFVLGIIIIISKKVKCRKADSRSESPTCKSCKSELPSSAPGGGGV.

The Extracellular segment spans residues 1-22 (MATPTQSPTNVPEETDPFFYDY). O-linked (GlcNAc) threonine glycans are attached at residues threonine 3, threonine 5, and threonine 9. Residues 23 to 45 (ATVQTVGMTLATIMFVLGIIIII) traverse the membrane as a helical segment. The Cytoplasmic segment spans residues 46–80 (SKKVKCRKADSRSESPTCKSCKSELPSSAPGGGGV). The interval 56–80 (SRSESPTCKSCKSELPSSAPGGGGV) is disordered. Residue serine 73 is modified to Phosphoserine.

Belongs to the FXYD family. As to quaternary structure, regulatory subunit of the sodium/potassium-transporting ATPase which is composed of a catalytic alpha subunit, a non-catalytic beta subunit and an additional regulatory subunit. The regulatory subunit, a member of the FXYD protein family, modulates the enzymatic activity in a tissue- and isoform-specific way by changing affinities of the Na+/K+-ATPase toward Na(+), K(+) or ATP. Post-translationally, O-glycosylated; required for stabilization and translocation to the plasma membrane. Expressed specifically in brain. Expressed in both neurons and glia.

The protein resides in the cell membrane. Functionally, associates with and regulates the activity of the sodium/potassium-transporting ATPase (NKA) which catalyzes the hydrolysis of ATP coupled with the exchange of Na(+) and K(+) ions across the plasma membrane. Reduces the apparent affinity for external K(+), an effect that depends on the presence of external Na(+) and voltage. Increases the apparent affinity for intracellular Na(+). The chain is FXYD domain-containing ion transport regulator 7 (Fxyd7) from Rattus norvegicus (Rat).